Here is a 66-residue protein sequence, read N- to C-terminus: ATP synthase subunit c (66 aa).

Helical transmembrane passes span 3–23 (LTFF…GMLM) and 45–65 (IMGI…SFVI).

This sequence belongs to the ATPase C chain family. In terms of assembly, F-type ATPases have 2 components, F(1) - the catalytic core - and F(0) - the membrane proton channel. F(1) has five subunits: alpha(3), beta(3), gamma(1), delta(1), epsilon(1). F(0) has three main subunits: a(1), b(2) and c(10-14). The alpha and beta chains form an alternating ring which encloses part of the gamma chain. F(1) is attached to F(0) by a central stalk formed by the gamma and epsilon chains, while a peripheral stalk is formed by the delta and b chains.

Its subcellular location is the cell membrane. Functionally, f(1)F(0) ATP synthase produces ATP from ADP in the presence of a proton or sodium gradient. F-type ATPases consist of two structural domains, F(1) containing the extramembraneous catalytic core and F(0) containing the membrane proton channel, linked together by a central stalk and a peripheral stalk. During catalysis, ATP synthesis in the catalytic domain of F(1) is coupled via a rotary mechanism of the central stalk subunits to proton translocation. In terms of biological role, key component of the F(0) channel; it plays a direct role in translocation across the membrane. A homomeric c-ring of between 10-14 subunits forms the central stalk rotor element with the F(1) delta and epsilon subunits. The polypeptide is ATP synthase subunit c (atpE) (Streptococcus oralis).